The chain runs to 937 residues: AP-2 complex subunit beta (937 aa).

Thr-2 bears the N-acetylthreonine mark. Ser-4 carries the post-translational modification Phosphoserine. An N6-acetyllysine modification is found at Lys-265. Positions 593–617 (LPIHHGSTDAGDSPVGTTTTTNLEQ) are disordered. A compositionally biased stretch (polar residues) spans 607 to 617 (VGTTTTTNLEQ). Residues Tyr-737 and Tyr-928 each carry the phosphotyrosine modification.

This sequence belongs to the adaptor complexes large subunit family. Adaptor protein complex 2 (AP-2) is a heterotetramer composed of two large adaptins (alpha-type subunit AP2A1 or AP2A2 and beta-type subunit AP2B1), a medium adaptin (mu-type subunit AP2M1) and a small adaptin (sigma-type subunit AP2S1). Interacts with EPN1. Interacts with EPS15; clathrin competes with EPS15. Interacts with SNAP91; clathrin competes with SNAP91. Interacts with CLTC; clathrin competes with EPS15, SNAP91 and PIP5K1C. Interacts with LDLRAP1. Interacts with AMPH and BIN1. Interacts with ARF6 (GDP-bound). Interacts (dephosphorylated at Tyr-737) with ARRB1; phosphorylation of AP2B1 at Tyr-737 disrupts the interaction. Interacts with SLC2A8. Interacts with SCYL1 and SCYL2. Interacts with TGFBR1 and TGFBR2. Interacts with PIP5K1C; clathrin competes with PIP5K1C. Interacts with DENND1B. Interacts with FCHO1. Interacts with RFTN1. Interacts with KIAA1107. Together with AP2A1 or AP2A2 and AP2M1, it interacts with ADAM10; this interaction facilitates ADAM10 endocytosis from the plasma membrane during long-term potentiation in hippocampal neurons. As to expression, expressed in the brain (at protein level).

It localises to the cell membrane. It is found in the membrane. Its subcellular location is the coated pit. Functionally, component of the adaptor protein complex 2 (AP-2). Adaptor protein complexes function in protein transport via transport vesicles in different membrane traffic pathways. Adaptor protein complexes are vesicle coat components and appear to be involved in cargo selection and vesicle formation. AP-2 is involved in clathrin-dependent endocytosis in which cargo proteins are incorporated into vesicles surrounded by clathrin (clathrin-coated vesicles, CCVs) which are destined for fusion with the early endosome. The clathrin lattice serves as a mechanical scaffold but is itself unable to bind directly to membrane components. Clathrin-associated adaptor protein (AP) complexes which can bind directly to both the clathrin lattice and to the lipid and protein components of membranes are considered to be the major clathrin adaptors contributing the CCV formation. AP-2 also serves as a cargo receptor to selectively sort the membrane proteins involved in receptor-mediated endocytosis. AP-2 seems to play a role in the recycling of synaptic vesicle membranes from the presynaptic surface. AP-2 recognizes Y-X-X-[FILMV] (Y-X-X-Phi) and [ED]-X-X-X-L-[LI] endocytosis signal motifs within the cytosolic tails of transmembrane cargo molecules. AP-2 may also play a role in maintaining normal post-endocytic trafficking through the ARF6-regulated, non-clathrin pathway. During long-term potentiation in hippocampal neurons, AP-2 is responsible for the endocytosis of ADAM10. The AP-2 beta subunit acts via its C-terminal appendage domain as a scaffolding platform for endocytic accessory proteins; at least some clathrin-associated sorting proteins (CLASPs) are recognized by their [DE]-X(1,2)-F-X-X-[FL]-X-X-X-R motif. The AP-2 beta subunit binds to clathrin heavy chain, promoting clathrin lattice assembly; clathrin displaces at least some CLASPs from AP2B1 which probably then can be positioned for further coat assembly. This Mus musculus (Mouse) protein is AP-2 complex subunit beta (Ap2b1).